The sequence spans 285 residues: Bifunctional protein FolD (285 aa).

NADP(+)-binding positions include 165–167 (GRS) and serine 190.

This sequence belongs to the tetrahydrofolate dehydrogenase/cyclohydrolase family. Homodimer.

It catalyses the reaction (6R)-5,10-methylene-5,6,7,8-tetrahydrofolate + NADP(+) = (6R)-5,10-methenyltetrahydrofolate + NADPH. The enzyme catalyses (6R)-5,10-methenyltetrahydrofolate + H2O = (6R)-10-formyltetrahydrofolate + H(+). It participates in one-carbon metabolism; tetrahydrofolate interconversion. Its function is as follows. Catalyzes the oxidation of 5,10-methylenetetrahydrofolate to 5,10-methenyltetrahydrofolate and then the hydrolysis of 5,10-methenyltetrahydrofolate to 10-formyltetrahydrofolate. The polypeptide is Bifunctional protein FolD (Ligilactobacillus salivarius (strain UCC118) (Lactobacillus salivarius)).